The sequence spans 660 residues: DNA mismatch repair protein MutL (660 aa).

It belongs to the DNA mismatch repair MutL/HexB family.

This protein is involved in the repair of mismatches in DNA. It is required for dam-dependent methyl-directed DNA mismatch repair. May act as a 'molecular matchmaker', a protein that promotes the formation of a stable complex between two or more DNA-binding proteins in an ATP-dependent manner without itself being part of a final effector complex. The sequence is that of DNA mismatch repair protein MutL from Solibacter usitatus (strain Ellin6076).